The chain runs to 181 residues: Large ribosomal subunit protein uL6 (181 aa).

It belongs to the universal ribosomal protein uL6 family. In terms of assembly, part of the 50S ribosomal subunit.

Its function is as follows. This protein binds to the 23S rRNA, and is important in its secondary structure. It is located near the subunit interface in the base of the L7/L12 stalk, and near the tRNA binding site of the peptidyltransferase center. In Hydrogenobaculum sp. (strain Y04AAS1), this protein is Large ribosomal subunit protein uL6.